We begin with the raw amino-acid sequence, 144 residues long: Cytochrome c-type biogenesis protein CcmE (144 aa).

Topologically, residues Met-1–Arg-7 are cytoplasmic. Residues Ala-8 to Ala-28 form a helical; Signal-anchor for type II membrane protein membrane-spanning segment. The Extracellular portion of the chain corresponds to Leu-29–Lys-144. His-121 and Tyr-125 together coordinate heme.

The protein belongs to the CcmE/CycJ family.

It is found in the cell membrane. In terms of biological role, heme chaperone required for the biogenesis of c-type cytochromes. Transiently binds heme delivered by CcmC and transfers the heme to apo-cytochromes in a process facilitated by CcmF and CcmH. In Polynucleobacter asymbioticus (strain DSM 18221 / CIP 109841 / QLW-P1DMWA-1) (Polynucleobacter necessarius subsp. asymbioticus), this protein is Cytochrome c-type biogenesis protein CcmE.